We begin with the raw amino-acid sequence, 675 residues long: DNA ligase (675 aa).

NAD(+)-binding positions include 41 to 45 (DAEYD), 90 to 91 (SL), and Glu-120. The active-site N6-AMP-lysine intermediate is Lys-122. Residues Arg-143, Glu-178, Lys-295, and Lys-319 each contribute to the NAD(+) site. The Zn(2+) site is built by Cys-413, Cys-416, Cys-431, and Cys-436. Residues 596–675 (GVPQTFAGKT…ADFLQLIDRV (80 aa)) enclose the BRCT domain.

Belongs to the NAD-dependent DNA ligase family. LigA subfamily. Mg(2+) is required as a cofactor. The cofactor is Mn(2+).

The enzyme catalyses NAD(+) + (deoxyribonucleotide)n-3'-hydroxyl + 5'-phospho-(deoxyribonucleotide)m = (deoxyribonucleotide)n+m + AMP + beta-nicotinamide D-nucleotide.. Functionally, DNA ligase that catalyzes the formation of phosphodiester linkages between 5'-phosphoryl and 3'-hydroxyl groups in double-stranded DNA using NAD as a coenzyme and as the energy source for the reaction. It is essential for DNA replication and repair of damaged DNA. The polypeptide is DNA ligase (Heliobacterium modesticaldum (strain ATCC 51547 / Ice1)).